We begin with the raw amino-acid sequence, 247 residues long: Caffeoyl-CoA O-methyltransferase 2 (247 aa).

Lys21 serves as a coordination point for substrate. S-adenosyl-L-methionine contacts are provided by residues Thr63, Glu85, 87 to 88 (GV), Ser93, Asp111, and Ala140. Asp163 lines the substrate pocket. Asp163 contributes to the a divalent metal cation binding site. Residue Asp165 participates in S-adenosyl-L-methionine binding. Asp189 and Asn190 together coordinate a divalent metal cation. Substrate is bound at residue Asn194.

The protein belongs to the class I-like SAM-binding methyltransferase superfamily. Cation-dependent O-methyltransferase family. CCoAMT subfamily. A divalent metal cation serves as cofactor.

The catalysed reaction is (E)-caffeoyl-CoA + S-adenosyl-L-methionine = (E)-feruloyl-CoA + S-adenosyl-L-homocysteine + H(+). It participates in aromatic compound metabolism; phenylpropanoid biosynthesis. Functionally, methylates caffeoyl-CoA to feruloyl-CoA and 5-hydroxyferuloyl-CoA to sinapoyl-CoA. Plays a role in the synthesis of feruloylated polysaccharides. Involved in the reinforcement of the plant cell wall. Also involved in the responding to wounding or pathogen challenge by the increased formation of cell wall-bound ferulic acid polymers. The sequence is that of Caffeoyl-CoA O-methyltransferase 2 (CCOAOMT2) from Populus trichocarpa (Western balsam poplar).